We begin with the raw amino-acid sequence, 247 residues long: UPF0246 protein LSL_1719 (247 aa).

The protein belongs to the UPF0246 family.

This chain is UPF0246 protein LSL_1719, found in Ligilactobacillus salivarius (strain UCC118) (Lactobacillus salivarius).